The sequence spans 130 residues: Small ribosomal subunit protein uS8 (130 aa).

This sequence belongs to the universal ribosomal protein uS8 family. Part of the 30S ribosomal subunit. Contacts proteins S5 and S12.

In terms of biological role, one of the primary rRNA binding proteins, it binds directly to 16S rRNA central domain where it helps coordinate assembly of the platform of the 30S subunit. The sequence is that of Small ribosomal subunit protein uS8 from Edwardsiella ictaluri (strain 93-146).